A 508-amino-acid chain; its full sequence is MAP kinase kinase MKK1/SSP32 (508 aa).

Disordered regions lie at residues 1-21, 35-95, and 130-158; these read MASLFRPPESAKCNPNSPRLK, IYLT…LSIN, and ELSGNSDLTPSSMASPFSHTNTSSPYLRN. Polar residues predominate over residues 35–47; it reads IYLTSNGSSTTAY. Positions 48–66 are enriched in low complexity; it reads SSHTPEPLTSSTSTLFSQT. Composition is skewed to polar residues over residues 67–79 and 131–158; these read RLHPSDSSMTLNT and LSGNSDLTPSSMASPFSHTNTSSPYLRN. S192 is subject to Phosphoserine. The 268-residue stretch at 221–488 folds into the Protein kinase domain; it reads IETLGILGEG…PRQMINHPWI (268 aa). Residues 227 to 235 and K250 each bind ATP; that span reads LGEGAGGSV. D349 (proton acceptor) is an active-site residue.

The protein belongs to the protein kinase superfamily. STE Ser/Thr protein kinase family. MAP kinase kinase subfamily.

The enzyme catalyses L-seryl-[protein] + ATP = O-phospho-L-seryl-[protein] + ADP + H(+). The catalysed reaction is L-threonyl-[protein] + ATP = O-phospho-L-threonyl-[protein] + ADP + H(+). It carries out the reaction L-tyrosyl-[protein] + ATP = O-phospho-L-tyrosyl-[protein] + ADP + H(+). Its function is as follows. Involved in a signal transduction pathway that play a role in yeast cell morphogenesis and cell growth. This pathway seems to start by SMP3; then involve the kinase PKC1 that may act on the BCK1 kinase that then phosphorylates MKK1 and MKK2 which themselves phosphorylate the MPK1 kinase. The protein is MAP kinase kinase MKK1/SSP32 (MKK1) of Saccharomyces cerevisiae (strain ATCC 204508 / S288c) (Baker's yeast).